A 480-amino-acid chain; its full sequence is Sporozoite surface protein P36p (480 aa).

Positions 1–22 are cleaved as a signal peptide; sequence MKRRSIFMYYCFCFLLKYVAFS. 6-Cys domains follow at residues 23 to 156 and 159 to 298; these read NVPN…FKKM and KIKG…TSKN. N-linked (GlcNAc...) asparagine glycans are attached at residues Asn28, Asn40, Asn92, Asn111, and Asn184. 6 cysteine pairs are disulfide-bonded: Cys37-Cys49, Cys63-Cys137, Cys80-Cys135, Cys163-Cys187, Cys201-Cys280, and Cys221-Cys278. N-linked (GlcNAc...) asparagine glycosylation is found at Asn294, Asn368, Asn375, Asn392, Asn405, Asn409, and Asn424. Positions 358 to 415 are disordered; the sequence is KMDSSDDDESNETESSENESNERTHNGNRANKDANNSEKMTGNRRKKNNSINNTNYYS. Residues 362-376 are compositionally biased toward acidic residues; that stretch reads SDDDESNETESSENE. The segment covering 377–393 has biased composition (basic and acidic residues); the sequence is SNERTHNGNRANKDANN. The segment covering 406–415 has biased composition (low complexity); that stretch reads NSINNTNYYS. A lipid anchor (GPI-anchor amidated serine) is attached at Ser457. A propeptide spans 458–480 (removed in mature form); the sequence is SSYYEVFNYFSIAFILIIHMLLL.

It is found in the cell surface. It localises to the cell membrane. In terms of biological role, involved in sporozoite infection of hepatocytes and replication therein. This Plasmodium yoelii yoelii protein is Sporozoite surface protein P36p (P52).